A 425-amino-acid polypeptide reads, in one-letter code: Cyanogenic beta-glucosidase (425 aa).

The N-terminal stretch at Leu1–Ala11 is a signal peptide. A beta-D-glucoside contacts are provided by residues Gln44, His148, and Asn193–Glu194. The Proton donor role is filled by Glu194. Residues Cys213 and Cys221 are joined by a disulfide bond. An N-linked (GlcNAc...) asparagine glycan is attached at Asn220. Residues Tyr337 and Glu408 each coordinate a beta-D-glucoside. Glu408 serves as the catalytic Nucleophile. N-linked (GlcNAc...) asparagine glycosylation is present at Asn412.

Belongs to the glycosyl hydrolase 1 family. As to quaternary structure, homodimer. In terms of tissue distribution, leaves.

The catalysed reaction is Hydrolysis of terminal, non-reducing beta-D-glucosyl residues with release of beta-D-glucose.. Functionally, hydrolyzes cyanoglucosides, contributing to the release of hydrocyanic acid, which functions as a defense mechanism against small predators, when the leaf tissue is damaged. This Trifolium repens (Creeping white clover) protein is Cyanogenic beta-glucosidase (LI).